Consider the following 387-residue polypeptide: MRAPEGFLLGGIKREGIGVGLIFSERRCAVAGTFTENTLRAAPVEHSEEVCDRGVARGVIVNSGHANAMTGEEGYQDVLRTAEAIAELMGAPEDEIVVCSTGVIGERPPVDKIVRYAREVWEDIGPTERHVREFSRAIMTTDTEEKIALYEGDGWSLLGIAKGAGMIHPNMSTMLAFLLTDVGAKPKELQMWLRDVVNDTFNMITVDGDESTNDSVVLLANGSSNLKVGSDVTITEFQRALEEVCTELAEKIVRDGEGATKLMIVCVHGASNEVEARRAARAIASSNLVKAALFGENPNWGRIGAAVGAARVDVDPDELRIAFRSSEGEIVTYEGGPVDFDEEKAKRVLSASEVEIVVDLGVGDASARAWGCDLTYEYVRINAEYRT.

6 residues coordinate substrate: Thr140, Lys162, Thr173, Glu257, Asn382, and Thr387. Residue Thr173 is the Nucleophile of the active site.

This sequence belongs to the ArgJ family. Heterotetramer of two alpha and two beta chains.

The protein resides in the cytoplasm. It carries out the reaction N(2)-acetyl-L-ornithine + L-glutamate = N-acetyl-L-glutamate + L-ornithine. The protein operates within amino-acid biosynthesis; L-arginine biosynthesis; L-ornithine and N-acetyl-L-glutamate from L-glutamate and N(2)-acetyl-L-ornithine (cyclic): step 1/1. Functionally, catalyzes the transfer of the acetyl group from N(2)-acetylornithine to glutamate, forming N-acetylglutamate and L-ornithine. The protein is Glutamate N-acetyltransferase of Methanopyrus kandleri (strain AV19 / DSM 6324 / JCM 9639 / NBRC 100938).